The sequence spans 398 residues: Mitogen-activated protein kinase 1 (398 aa).

The disordered stretch occupies residues 1 to 26; the sequence is MDAGAQPPDTEMAEAGGGQQPPAAAA. Positions 67–352 constitute a Protein kinase domain; the sequence is KPPILPIGKG…VEGALAHPYL (286 aa). ATP contacts are provided by residues 73 to 81 and Lys-96; that span reads IGKGAYGIV. The active-site Proton acceptor is the Asp-193. The residue at position 225 (Thr-225) is a Phosphothreonine. Positions 225–227 match the TXY motif; sequence TEY. Position 227 is a phosphotyrosine (Tyr-227).

Belongs to the protein kinase superfamily. CMGC Ser/Thr protein kinase family. MAP kinase subfamily. As to quaternary structure, may interact with RAC1. In terms of processing, dually phosphorylated on Thr-225 and Tyr-227, which activates the enzyme.

The catalysed reaction is L-seryl-[protein] + ATP = O-phospho-L-seryl-[protein] + ADP + H(+). It carries out the reaction L-threonyl-[protein] + ATP = O-phospho-L-threonyl-[protein] + ADP + H(+). Its activity is regulated as follows. Activated by threonine and tyrosine phosphorylation. Activated in response to sphingolipid elicitor (SE). In terms of biological role, involved in sphingolipid elicitor (SE)-dependent defense signaling pathway. Acts downstream of heterotrimeric G protein alpha subunit and small GTPase RAC1. May regulate the expression of various genes involved in biotic and abiotic stress response. Involved in an abscisic acid signaling pathway that regulates the activities of antioxidant enzymes and the production of hydrogen peroxide. Acts downstream of CCAMK. This chain is Mitogen-activated protein kinase 1 (MPK1), found in Oryza sativa subsp. japonica (Rice).